A 299-amino-acid chain; its full sequence is Probable GTP 3',8-cyclase (299 aa).

The Radical SAM core domain occupies 4 to 229 (LHNREIKSLR…MQNRKKYLVD (226 aa)). GTP is bound at residue R13. C20 and C24 together coordinate [4Fe-4S] cluster. Residue Y26 coordinates S-adenosyl-L-methionine. A [4Fe-4S] cluster-binding site is contributed by C27. K61 contacts GTP. Residue G65 participates in S-adenosyl-L-methionine binding. Residue T94 participates in GTP binding. Position 118 (S118) interacts with S-adenosyl-L-methionine. A GTP-binding site is contributed by K154. C245 and C248 together coordinate [4Fe-4S] cluster. GTP is bound at residue 250–252 (RIR). C262 lines the [4Fe-4S] cluster pocket.

It belongs to the radical SAM superfamily. MoaA family. [4Fe-4S] cluster serves as cofactor.

It catalyses the reaction GTP + AH2 + S-adenosyl-L-methionine = (8S)-3',8-cyclo-7,8-dihydroguanosine 5'-triphosphate + 5'-deoxyadenosine + L-methionine + A + H(+). It functions in the pathway cofactor biosynthesis; molybdopterin biosynthesis. Its function is as follows. Catalyzes the cyclization of GTP to (8S)-3',8-cyclo-7,8-dihydroguanosine 5'-triphosphate. In Methanococcus aeolicus (strain ATCC BAA-1280 / DSM 17508 / OCM 812 / Nankai-3), this protein is Probable GTP 3',8-cyclase.